Consider the following 156-residue polypeptide: 6,7-dimethyl-8-ribityllumazine synthase (156 aa).

5-amino-6-(D-ribitylamino)uracil-binding positions include F22, 57-59 (AYE), and 81-83 (TVI). 86–87 (GT) is a (2S)-2-hydroxy-3-oxobutyl phosphate binding site. H89 serves as the catalytic Proton donor. F114 provides a ligand contact to 5-amino-6-(D-ribitylamino)uracil. R128 contributes to the (2S)-2-hydroxy-3-oxobutyl phosphate binding site.

Belongs to the DMRL synthase family. Forms an icosahedral capsid composed of 60 subunits, arranged as a dodecamer of pentamers.

It carries out the reaction (2S)-2-hydroxy-3-oxobutyl phosphate + 5-amino-6-(D-ribitylamino)uracil = 6,7-dimethyl-8-(1-D-ribityl)lumazine + phosphate + 2 H2O + H(+). Its pathway is cofactor biosynthesis; riboflavin biosynthesis; riboflavin from 2-hydroxy-3-oxobutyl phosphate and 5-amino-6-(D-ribitylamino)uracil: step 1/2. Catalyzes the formation of 6,7-dimethyl-8-ribityllumazine by condensation of 5-amino-6-(D-ribitylamino)uracil with 3,4-dihydroxy-2-butanone 4-phosphate. This is the penultimate step in the biosynthesis of riboflavin. The protein is 6,7-dimethyl-8-ribityllumazine synthase of Citrobacter koseri (strain ATCC BAA-895 / CDC 4225-83 / SGSC4696).